We begin with the raw amino-acid sequence, 504 residues long: Glutamate--tRNA ligase (504 aa).

A 'HIGH' region motif is present at residues 12–22; it reads PSPTGALHIGG. Positions 260–264 match the 'KMSKS' region motif; the sequence is KLSKR. Lys-263 is a binding site for ATP.

This sequence belongs to the class-I aminoacyl-tRNA synthetase family. Glutamate--tRNA ligase type 1 subfamily. Monomer.

The protein resides in the cytoplasm. It carries out the reaction tRNA(Glu) + L-glutamate + ATP = L-glutamyl-tRNA(Glu) + AMP + diphosphate. In terms of biological role, catalyzes the attachment of glutamate to tRNA(Glu) in a two-step reaction: glutamate is first activated by ATP to form Glu-AMP and then transferred to the acceptor end of tRNA(Glu). The sequence is that of Glutamate--tRNA ligase from Bacteroides thetaiotaomicron (strain ATCC 29148 / DSM 2079 / JCM 5827 / CCUG 10774 / NCTC 10582 / VPI-5482 / E50).